Here is a 253-residue protein sequence, read N- to C-terminus: MASSSNWLSGVNVVLVMAYGSLVFVLLFIFVKRQIMRFAMKSRRGPHVPVGHNAPKDLKEEIDIRLSRVQDIKYEPQLLADDDTRLLQLETQGNQSCYNYLYRMKALDAIRASEIPFHAEGRHPCSLMGKNFRSYLLDLRNTSTPFKGVGKALIDTLLDGYETARYGTGVFGQSEYLRYQEALSELATVVKARIGSSQRQHQSAAKDLTQSPEMSPTTIQVTYLPSSQKSKRPKHFLELKSFKDNYNTLESTL.

The chain crosses the membrane as a helical span at residues 11 to 31 (VNVVLVMAYGSLVFVLLFIFV).

It is found in the membrane. The protein localises to the golgi apparatus. It localises to the mitochondrion. Functionally, general regulator of phagocytosis. Required to uptake Gram negative bacterium by macrophages. The chain is Protein C1orf43 homolog from Mus musculus (Mouse).